The primary structure comprises 66 residues: Large ribosomal subunit protein bL35 (66 aa).

It belongs to the bacterial ribosomal protein bL35 family.

This Parvibaculum lavamentivorans (strain DS-1 / DSM 13023 / NCIMB 13966) protein is Large ribosomal subunit protein bL35.